We begin with the raw amino-acid sequence, 266 residues long: Thiazole synthase (266 aa).

Lysine 106 serves as the catalytic Schiff-base intermediate with DXP. 1-deoxy-D-xylulose 5-phosphate is bound by residues glycine 167, 193–194 (AG), and 215–216 (NT).

It belongs to the ThiG family. Homotetramer. Forms heterodimers with either ThiH or ThiS.

The protein resides in the plastid. It is found in the chloroplast. The catalysed reaction is [ThiS sulfur-carrier protein]-C-terminal-Gly-aminoethanethioate + 2-iminoacetate + 1-deoxy-D-xylulose 5-phosphate = [ThiS sulfur-carrier protein]-C-terminal Gly-Gly + 2-[(2R,5Z)-2-carboxy-4-methylthiazol-5(2H)-ylidene]ethyl phosphate + 2 H2O + H(+). Its pathway is cofactor biosynthesis; thiamine diphosphate biosynthesis. In terms of biological role, catalyzes the rearrangement of 1-deoxy-D-xylulose 5-phosphate (DXP) to produce the thiazole phosphate moiety of thiamine. Sulfur is provided by the thiocarboxylate moiety of the carrier protein ThiS. In vitro, sulfur can be provided by H(2)S. This Cyanidium caldarium (Red alga) protein is Thiazole synthase.